Consider the following 355-residue polypeptide: Spore germination protein XB (355 aa).

The next 10 helical transmembrane spans lie at 2-24 (VNFF…VIII), 34-56 (DSWI…VFIV), 69-91 (LMRN…YLII), 106-128 (FYLP…FYNI), 135-157 (IALT…MIAN), 180-197 (GMIY…ILFL), 210-232 (LIIV…IVEF), 265-287 (VYQW…PDVL), 299-321 (ISIL…SFYW), and 326-348 (VFLP…FVWV).

Belongs to the amino acid-polyamine-organocation (APC) superfamily. Spore germination protein (SGP) (TC 2.A.3.9) family.

It localises to the cell membrane. In terms of biological role, may allow B.anthracis to germinate within phagocytic cells and therefore involved in virulence. The polypeptide is Spore germination protein XB (gerXB) (Bacillus anthracis).